Consider the following 450-residue polypeptide: Magnesium transporter MgtE (450 aa).

Residues 1 to 283 (MEEKLAVSLQ…SEAGPVALWL (283 aa)) lie on the Cytoplasmic side of the membrane. Residues glutamate 59, aspartate 91, aspartate 95, and glycine 136 each coordinate Mg(2+). CBS domains are found at residues 138–200 (MTPE…RVAE) and 202–258 (MNPK…EATE). Residues tyrosine 170, serine 185, arginine 187, aspartate 188, and valine 207 each coordinate ATP. 8 residues coordinate Mg(2+): glutamate 216, alanine 223, aspartate 226, aspartate 247, aspartate 250, glutamate 255, glutamate 258, and aspartate 259. Glutamate 275 contributes to the Ca(2+) binding site. 4 residues coordinate Mn(2+): glutamate 275, glutamine 304, glutamate 307, and glutamate 311. Residues 284–306 (ARVRWLVILILTGMVTSSILQGF) form a helical membrane-spanning segment. Residues 307–315 (ESVLEAVTA) lie on the Periplasmic side of the membrane. A Ca(2+)-binding site is contributed by glutamate 311. The helical transmembrane segment at 316–337 (LAFYVPVLLGTGGNTGNQSATL) threads the bilayer. Topologically, residues 338 to 351 (IIRALATRDLDLRD) are cytoplasmic. The chain crosses the membrane as a helical span at residues 352–381 (WRRVFLKEMGVGLLLGLTLSFLLVGKVYWD). Topologically, residues 382–385 (GHPL) are periplasmic. Residue histidine 383 coordinates Mn(2+). The helical transmembrane segment at 386-409 (LLPVVGVSLVLIVFFANLVGAMLP) threads the bilayer. Over 410–420 (FLLRRLGVDPA) the chain is Cytoplasmic. Residues aspartate 418, alanine 428, and aspartate 432 each coordinate Mg(2+). The helical transmembrane segment at 421–443 (LVSNPLVATLSDVTGLLIYLSVA) threads the bilayer. Residues 444–450 (RLLLEAV) are Periplasmic-facing.

Belongs to the SLC41A transporter family. Homodimer.

The protein resides in the cell inner membrane. The catalysed reaction is Mg(2+)(in) = Mg(2+)(out). With respect to regulation, the channel activity is regulated via the N-terminal cytoplasmic region, which acts as a Mg(2+) sensor to regulate the gating of the ion-conducting pore in response to the intracellular magnesium concentration. Under high-intracellular magnesium conditions, binding of magnesium to the N-terminal cytoplasmic domain stabilizes the closed conformation of the channel. Under low-intracellular magnesium conditions, the channel is in equilibrium between the open and closed states. A cation-binding site within the membrane (M1) strictly recognizes the size and geometry of the Mg(2+) hydration shells, which may be important for the selective transport of Mg(2+) over other cations. Cation-binding sites on the periplasmic side (M2 and M3) regulate channel opening and prevent conduction of near-cognate cations. Binding of Mn(2+) to the periplasmic sites strongly inhibits the Mg(2+) transport activity. In addition, activity is regulated by ATP, which binds to MgtE and modulates its Mg(2+)-dependent channel gating. ATP binding enhances the intracellular domain affinity for Mg(2+) within physiological concentrations of this divalent cation, enabling MgtE to function as an in vivo Mg(2+) sensor. ATP dissociation from MgtE upregulates Mg(2+) influx at both high and low intracellular Mg(2+) concentrations. Its function is as follows. Highly selective magnesium channel that plays an important role in Mg(2+) homeostasis. Functions as a Mg(2+)-dependent gating channel. Exhibits low activity with cobalt, suggesting that it might also be involved in the uptake of Co(2+) as a micronutrient. Also exhibits low activity with Ca(2+), but it shows almost no activity with Mn(2+). In Thermus thermophilus (strain ATCC 27634 / DSM 579 / HB8), this protein is Magnesium transporter MgtE.